The sequence spans 261 residues: uncharacterized protein (261 aa).

Positions 16 to 147 form a coiled coil; sequence KQTSLVLQNL…QTNVNVLRSQ (132 aa).

Its subcellular location is the cytoplasm. This is an uncharacterized protein from Schizosaccharomyces pombe (strain 972 / ATCC 24843) (Fission yeast).